The chain runs to 507 residues: Hippocampus abundant transcript-like protein 1 (507 aa).

Residues 1–22 (MSTDGESPEEPGWKAVASPKAS) are disordered. Topologically, residues 1-51 (MSTDGESPEEPGWKAVASPKASAMPEKRGSAQAASSSWLQGFGQPSVYHAA) are extracellular. A helical membrane pass occupies residues 52-72 (FVIFFEFFAWGLLTTPMLTVL). Residues 73-84 (HETFPQHTFLMN) lie on the Cytoplasmic side of the membrane. The chain crosses the membrane as a helical span at residues 85–105 (GLIQGVKGLLSFLSAPLIGAL). The Extracellular segment spans residues 106–113 (SDVWGRKP). Residues 114–134 (FLLGTVFFTCFPIPLMRISPW) form a helical membrane-spanning segment. At 135–136 (WY) the chain is on the cytoplasmic side. A helical transmembrane segment spans residues 137-157 (FGMISVSGVFSVTFSVIFAYV). Over 158-170 (ADFTQEHERSTAY) the chain is Extracellular. Residues 171–191 (GWVSATFAASLVSSPAIGTYL) form a helical membrane-spanning segment. At 192–198 (SSNYGDS) the chain is on the cytoplasmic side. Residues 199–219 (LVVLVATVVALLDICFILVAV) traverse the membrane as a helical segment. At 220–257 (PESLPEKIRPASWGAQISWKQADPFASLKKVGKDSTVL) the chain is on the extracellular side. The helical transmembrane segment at 258–278 (LICITVFLSYLPEAGQYSSFF) threads the bilayer. At 279–283 (LYLRQ) the chain is on the cytoplasmic side. Residues 284–304 (VIGFGSVKIVAFIAMVGILSI) form a helical membrane-spanning segment. The Extracellular portion of the chain corresponds to 305–323 (LAQTVFLSKLMRSLGNKNT). The chain crosses the membrane as a helical span at residues 324–344 (VLLGLGFQILQLAWYGFGAQA). The Cytoplasmic segment spans residues 345–347 (WMM). The chain crosses the membrane as a helical span at residues 348–368 (WAAGTVAAMSSITFPAVSALI). Over 369–389 (SRNAESDQQGVAQGIITGIRG) the chain is Extracellular. A helical transmembrane segment spans residues 390-410 (LCNGLGPALYGFIFYLFHVEL). Residues 411-430 (NELGPKLDSDNDPLQGAFIP) lie on the Cytoplasmic side of the membrane. Residues 431–451 (GPPFLFGACIVLMSFLVALFI) traverse the membrane as a helical segment. Over 452-507 (PEYRKTGGVQKHNNSISGSLSTPPERGSDEDIEPLLQDSNIWELSSEEPGNQCTEL) the chain is Extracellular. Residues 462 to 473 (KHNNSISGSLST) show a composition bias toward polar residues. The disordered stretch occupies residues 462 to 483 (KHNNSISGSLSTPPERGSDEDI). An N-linked (GlcNAc...) asparagine glycan is attached at asparagine 464.

It belongs to the major facilitator superfamily.

Its subcellular location is the membrane. This Rattus norvegicus (Rat) protein is Hippocampus abundant transcript-like protein 1.